The following is a 438-amino-acid chain: UDP-N-acetylmuramoylalanine--D-glutamate ligase (438 aa).

Position 112-118 (112-118 (GSNGKST)) interacts with ATP.

The protein belongs to the MurCDEF family.

Its subcellular location is the cytoplasm. It carries out the reaction UDP-N-acetyl-alpha-D-muramoyl-L-alanine + D-glutamate + ATP = UDP-N-acetyl-alpha-D-muramoyl-L-alanyl-D-glutamate + ADP + phosphate + H(+). The protein operates within cell wall biogenesis; peptidoglycan biosynthesis. Cell wall formation. Catalyzes the addition of glutamate to the nucleotide precursor UDP-N-acetylmuramoyl-L-alanine (UMA). In Salmonella paratyphi A (strain ATCC 9150 / SARB42), this protein is UDP-N-acetylmuramoylalanine--D-glutamate ligase.